The sequence spans 254 residues: MNRRRRIYEGKAKILYEGPEPGTLVQFFKDDATAFNAKKHEVIDGKGVLNNRISEHIFTQLNRIGIPTHFIRRLNMREQLIKEVEIIPLEVVVRNVAAGSLAKRLGLEEGTVLPRSIIEFYYKADALDDPMVTEEHITAFGWASPPEIDDIMALAIRVNDFLTGLFLGIGIQLVDFKMECGRLWEGDMMRIVVADEISPDSARLWDITTNDKLDKDRFRRDMGGLVEAYQEVARRLGIMNENDTPRPAGPTLVK.

Belongs to the SAICAR synthetase family.

The catalysed reaction is 5-amino-1-(5-phospho-D-ribosyl)imidazole-4-carboxylate + L-aspartate + ATP = (2S)-2-[5-amino-1-(5-phospho-beta-D-ribosyl)imidazole-4-carboxamido]succinate + ADP + phosphate + 2 H(+). The protein operates within purine metabolism; IMP biosynthesis via de novo pathway; 5-amino-1-(5-phospho-D-ribosyl)imidazole-4-carboxamide from 5-amino-1-(5-phospho-D-ribosyl)imidazole-4-carboxylate: step 1/2. The chain is Phosphoribosylaminoimidazole-succinocarboxamide synthase from Brucella anthropi (strain ATCC 49188 / DSM 6882 / CCUG 24695 / JCM 21032 / LMG 3331 / NBRC 15819 / NCTC 12168 / Alc 37) (Ochrobactrum anthropi).